Reading from the N-terminus, the 419-residue chain is eIF5-mimic protein 1 (419 aa).

Positions 1-22 (MNKHQKPVLTGQRFKTRKRDEK) are disordered. N6-acetyllysine is present on Lys-117. Positions 248 to 415 (VQQSLGTRKE…QNAEEESESE (168 aa)) constitute a W2 domain. Ser-412, Ser-414, and Ser-419 each carry phosphoserine.

The protein belongs to the BZW family. In terms of assembly, interacts with EIF3E, EIF2S2 and EIF3C. As to expression, expressed at high levels in heart, and at lower levels in skeletal muscle, spleen and lung. Expressed at low levels in brain regions where nascent and immature neurons are present.

The protein localises to the cytoplasm. Translation initiation regulator which represses non-AUG initiated translation and repeat-associated non-AUG (RAN) initiated translation by acting as a competitive inhibitor of eukaryotic translation initiation factor 5 (EIF5) function. Increases the accuracy of translation initiation by impeding EIF5-dependent translation from non-AUG codons by competing with it for interaction with EIF2S2 within the 43S pre-initiation complex (PIC) in an EIF3C-binding dependent manner. In Rattus norvegicus (Rat), this protein is eIF5-mimic protein 1 (Bzw2).